A 904-amino-acid polypeptide reads, in one-letter code: Envelope glycoprotein B (904 aa).

An N-terminal signal peptide occupies residues 1 to 30 (MRQGAPARGRRWFVVWALLGLTLGVLVASA). Low complexity predominate over residues 31 to 52 (APSSPGTPGVAAATQAANGGPA). Positions 31 to 88 (APSSPGTPGVAAATQAANGGPATPAPPAPGAPPTGDPKPKKNRKPKPPKPPRPAGDNA) are disordered. The Virion surface segment spans residues 31–774 (APSSPGTPGV…SGVSSFMSNP (744 aa)). The segment covering 53–66 (TPAPPAPGAPPTGD) has biased composition (pro residues). Residues 70–79 (KKNRKPKPPK) show a composition bias toward basic residues. N-linked (GlcNAc...) asparagine; by host glycans are attached at residues Asn-87 and Asn-141. 5 disulfides stabilise this stretch: Cys-116/Cys-573, Cys-133/Cys-529, Cys-207/Cys-271, Cys-364/Cys-412, and Cys-596/Cys-633. Involved in fusion and/or binding to host membrane regions lie at residues 173 to 179 (VWFGHRY) and 258 to 265 (RVEAFHRY). Residues Asn-398 and Asn-430 are each glycosylated (N-linked (GlcNAc...) asparagine; by host). Residues 470–492 (REQSRKPPNPTPPPPGASANASV) form a disordered region. Positions 476–485 (PPNPTPPPPG) are enriched in pro residues. Residue Asn-489 is glycosylated (N-linked (GlcNAc...) asparagine; by host). Asn-674 carries an N-linked (GlcNAc...) asparagine; by host glycan. The tract at residues 719–772 (IDTVIHADANAAMFAGLGAFFEGMGDLGRAVGKVVMGIVGGVVSAVSGVSSFMS) is hydrophobic membrane proximal region. The chain crosses the membrane as a helical span at residues 775–795 (FGALAVGLLVLAGLAAAFFAF). Over 796-904 (RYVMRLQSNP…KDGDADEDDL (109 aa)) the chain is Intravirion. The Golgi targeting motif lies at 849-852 (YMAL). Residues 883–904 (KRRNTNYTQVPNKDGDADEDDL) are disordered. Positions 889–892 (YTQV) match the Internalization motif motif.

Belongs to the herpesviridae glycoprotein B family. In terms of assembly, homotrimer; disulfide-linked. Interacts with host receptor MYH9/NMMHC-IIA. Interacts with host receptor MYH10/NMMHC-IIB. Binds to heparan sulfate proteoglycans. Interacts with gH/gL heterodimer. Interacts with host DEFA1, DEFA2 and DEFA3; these interactions inhibit viral infection. In terms of processing, the cytoplasmic tail is phosphorylated by the viral kinase US3. Phosphorylation may be linked to a down-regulation of gB expression on cell surface. Post-translationally, ubiquitinated.

The protein resides in the virion membrane. The protein localises to the host cell membrane. Its subcellular location is the host endosome membrane. It localises to the host Golgi apparatus membrane. Functionally, envelope glycoprotein that forms spikes at the surface of virion envelope and binds to the host cell entry receptors MYH9/NMMHC-IIA and MYH10/NMMHC-IIB, promoting the virus entry into host cells. Essential for the initial attachment to heparan sulfate moieties of the host cell surface proteoglycans. Involved in fusion of viral and cellular membranes leading to virus entry into the host cell: following initial binding to its host cell entry receptors, membrane fusion is mediated by the fusion machinery composed at least of gB and the heterodimer gH/gL. May be involved in the fusion between the virion envelope and the outer nuclear membrane during virion egress. Also plays a role, together with gK, in virus-induced cell-to-cell fusion (syncytia formation). The protein is Envelope glycoprotein B of Homo sapiens (Human).